The following is a 339-amino-acid chain: MTASQQQIQLARRPQGIPVHEDFRFETIPVPEPKQGEVLVKTLYVSVDPYMRGRMQDTKSYVEPFALDKALSGGVIAEVVSDGNHLKKGDIVIGNLSWQEFSAVSESALRKIDTSLAPASAYLGILGMTGLTAYFGLLDIGRPKEGETVVVSGAAGAVGSTVGQIAKIKGARVVGIAGSDEKIDYLKQELQFDEAINYKTADDIQKALQNACPDGVDVYFDNVGGPISDAVMNLLNEFARIPVCGAISSYNAESEADDMGPRVQSKLIKTKSLMQGFIVSDYSDRFSEGAKQLAEWLKAGKLHYEETITEGFENIPDAFLGLFKGENKGKQLIKVSDPS.

NADP(+) contacts are provided by residues 156–159 (GAVG), K182, Y198, N222, 244–250 (CGAISSY), 277–279 (FIV), and N327.

This sequence belongs to the NADP-dependent oxidoreductase L4BD family.

In terms of biological role, putative quinone oxidoreductase that may contribute to the degradation of aromatic compounds. In Bacillus subtilis (strain 168), this protein is Putative NADP-dependent oxidoreductase YfmJ (yfmJ).